The following is a 92-amino-acid chain: Cell division protein FtsB (92 aa).

Residues 1–3 lie on the Cytoplasmic side of the membrane; sequence MRL. Residues 4–21 form a helical membrane-spanning segment; it reads FIFLLVAVLLLFQYDFWF. Residues 22-92 are Periplasmic-facing; it reads GKNGYLDYKR…IFYHIVKEQK (71 aa). The stretch at 26-74 forms a coiled coil; sequence YLDYKRTAQQIAQHKQENEKLSQRNQVVAAEIKDLKQGVEAIEERARFQ.

Belongs to the FtsB family. Part of a complex composed of FtsB, FtsL and FtsQ.

The protein resides in the cell inner membrane. Functionally, essential cell division protein. May link together the upstream cell division proteins, which are predominantly cytoplasmic, with the downstream cell division proteins, which are predominantly periplasmic. This chain is Cell division protein FtsB, found in Pasteurella multocida (strain Pm70).